The primary structure comprises 476 residues: Probable coniferyl aldehyde dehydrogenase (476 aa).

Active-site residues include glutamate 225 and cysteine 259.

The protein belongs to the aldehyde dehydrogenase family. Homodimer.

The enzyme catalyses (E)-coniferaldehyde + NADP(+) + H2O = (E)-ferulate + NADPH + 2 H(+). The catalysed reaction is (E)-coniferaldehyde + NAD(+) + H2O = (E)-ferulate + NADH + 2 H(+). This is Probable coniferyl aldehyde dehydrogenase (calB) from Pseudomonas aeruginosa (strain ATCC 15692 / DSM 22644 / CIP 104116 / JCM 14847 / LMG 12228 / 1C / PRS 101 / PAO1).